The chain runs to 439 residues: Trigger factor (439 aa).

Positions 165 to 250 constitute a PPIase FKBP-type domain; that stretch reads GDFAKFDFEG…LHEIQELKLP (86 aa).

Belongs to the FKBP-type PPIase family. Tig subfamily.

It is found in the cytoplasm. It carries out the reaction [protein]-peptidylproline (omega=180) = [protein]-peptidylproline (omega=0). Its function is as follows. Involved in protein export. Acts as a chaperone by maintaining the newly synthesized protein in an open conformation. Functions as a peptidyl-prolyl cis-trans isomerase. This Campylobacter lari (strain RM2100 / D67 / ATCC BAA-1060) protein is Trigger factor.